A 466-amino-acid chain; its full sequence is UDP-N-acetylmuramate--L-alanine ligase (466 aa).

114-120 (GTHGKTT) serves as a coordination point for ATP.

This sequence belongs to the MurCDEF family.

The protein localises to the cytoplasm. It carries out the reaction UDP-N-acetyl-alpha-D-muramate + L-alanine + ATP = UDP-N-acetyl-alpha-D-muramoyl-L-alanine + ADP + phosphate + H(+). Its pathway is cell wall biogenesis; peptidoglycan biosynthesis. Cell wall formation. The sequence is that of UDP-N-acetylmuramate--L-alanine ligase from Mesorhizobium japonicum (strain LMG 29417 / CECT 9101 / MAFF 303099) (Mesorhizobium loti (strain MAFF 303099)).